The chain runs to 562 residues: Arginine--tRNA ligase (562 aa).

The short motif at A129–H139 is the 'HIGH' region element.

This sequence belongs to the class-I aminoacyl-tRNA synthetase family. Monomer.

It is found in the cytoplasm. The catalysed reaction is tRNA(Arg) + L-arginine + ATP = L-arginyl-tRNA(Arg) + AMP + diphosphate. This Xylella fastidiosa (strain M12) protein is Arginine--tRNA ligase.